We begin with the raw amino-acid sequence, 1033 residues long: Isoleucine--tRNA ligase 2 (1033 aa).

Residues 47–57 carry the 'HIGH' region motif; sequence PTANGLPHVGH. The 'KMSKS' region motif lies at 590–594; sequence KMSKS. Lys-593 lines the ATP pocket.

It belongs to the class-I aminoacyl-tRNA synthetase family. IleS type 2 subfamily. As to quaternary structure, monomer. It depends on Zn(2+) as a cofactor.

The protein localises to the cytoplasm. It carries out the reaction tRNA(Ile) + L-isoleucine + ATP = L-isoleucyl-tRNA(Ile) + AMP + diphosphate. Its function is as follows. Catalyzes the attachment of isoleucine to tRNA(Ile). As IleRS can inadvertently accommodate and process structurally similar amino acids such as valine, to avoid such errors it has two additional distinct tRNA(Ile)-dependent editing activities. One activity is designated as 'pretransfer' editing and involves the hydrolysis of activated Val-AMP. The other activity is designated 'posttransfer' editing and involves deacylation of mischarged Val-tRNA(Ile). This is Isoleucine--tRNA ligase 2 from Bacillus cereus (strain ATCC 14579 / DSM 31 / CCUG 7414 / JCM 2152 / NBRC 15305 / NCIMB 9373 / NCTC 2599 / NRRL B-3711).